The primary structure comprises 79 residues: Small ribosomal subunit protein bS18 (79 aa).

It belongs to the bacterial ribosomal protein bS18 family. Part of the 30S ribosomal subunit. Forms a tight heterodimer with protein bS6.

Its function is as follows. Binds as a heterodimer with protein bS6 to the central domain of the 16S rRNA, where it helps stabilize the platform of the 30S subunit. In Streptococcus agalactiae serotype Ia (strain ATCC 27591 / A909 / CDC SS700), this protein is Small ribosomal subunit protein bS18.